A 417-amino-acid chain; its full sequence is Frizzy aggregation protein FrzCD (417 aa).

Positions 1–11 (MSLDTPNEKPA) are enriched in basic and acidic residues. Residues 1 to 34 (MSLDTPNEKPAGKARARKAPASKAGATNAASTSS) are disordered. Residues 21–34 (ASKAGATNAASTSS) are compositionally biased toward low complexity. Residues 144–380 (AALRLSSSAN…QVVASMAEIE (237 aa)) form the Methyl-accepting transducer domain.

This sequence belongs to the methyl-accepting chemotaxis (MCP) protein family. Post-translationally, methylated. Saturated fatty acids capric acid and lauric acid stimulate methylation. Short-chain alcohols, such as isoamyl alcohol, and some other solvents cause demethylation.

Its subcellular location is the cytoplasm. Its function is as follows. Methyl-accepting taxis protein necessary for the proper aggregation of cells to form fruiting bodies. Frz genes define a system of signal transduction analogous to the enterobacterial chemotaxis systems. This chain is Frizzy aggregation protein FrzCD (frzCD), found in Myxococcus xanthus.